A 687-amino-acid polypeptide reads, in one-letter code: DNA ligase (687 aa).

Residues 34 to 38 (DAEYD), 83 to 84 (SL), and E117 each bind NAD(+). The active-site N6-AMP-lysine intermediate is the K119. Residues R140, E182, K298, and K322 each contribute to the NAD(+) site. Residues C416, C419, C434, and C439 each coordinate Zn(2+). Residues 609–687 (EARGPFAGKT…EEEFVRLLKE (79 aa)) form the BRCT domain.

This sequence belongs to the NAD-dependent DNA ligase family. LigA subfamily. Requires Mg(2+) as cofactor. The cofactor is Mn(2+).

It carries out the reaction NAD(+) + (deoxyribonucleotide)n-3'-hydroxyl + 5'-phospho-(deoxyribonucleotide)m = (deoxyribonucleotide)n+m + AMP + beta-nicotinamide D-nucleotide.. DNA ligase that catalyzes the formation of phosphodiester linkages between 5'-phosphoryl and 3'-hydroxyl groups in double-stranded DNA using NAD as a coenzyme and as the energy source for the reaction. It is essential for DNA replication and repair of damaged DNA. The protein is DNA ligase of Anaeromyxobacter dehalogenans (strain 2CP-1 / ATCC BAA-258).